Reading from the N-terminus, the 148-residue chain is Auxin-responsive protein SAUR65 (148 aa).

Belongs to the ARG7 family.

It is found in the cell membrane. Its function is as follows. May promote auxin-stimulated organ elongation, such as hypocotyls, stamen filaments and petals. This Arabidopsis thaliana (Mouse-ear cress) protein is Auxin-responsive protein SAUR65.